The following is a 448-amino-acid chain: MSTHLTETWEKAINIIKGELTEVSFNTWIKSINPISLENNSFKLAVPNDFTKGILESRYKDLIVNALKLLTSKKYNIDFIVTTEEKIEENEKNHNNEKSNIVVNDEMSTMLNPKYTFDSFVIGNSNRFAHAASLAVAEAPAKAYNPLFIYGGVGLGKTHLMHAIGHYILHNNPKSQVVYVSSEKFTNELINSIKDDKNVEFRNKYRNIDILLVDDIQFIAGKERTQEEFFHTFNALYEANKQIIISSDRPPKEIPTLEDRLRSRFEWGLIADIQAPDFETRMAILKKKADVEKLNIPNEVMVYIATKIKSNIRELEGALIRIVAFSSLTNKEISVDLASEALKDIISSKQTRQVTIDIIQEVVANYYNLKIEDLKSARRTRNIAFPRQIAMYLSRKLTDMSLPKIGEEFGGRDHTTVIHAYEKISNNLKKDESLQNAINELNKRINQK.

Residues 1-73 (MSTHLTETWE…VNALKLLTSK (73 aa)) form a domain I, interacts with DnaA modulators region. The interval 73 to 109 (KKYNIDFIVTTEEKIEENEKNHNNEKSNIVVNDEMST) is domain II. The interval 110 to 326 (MLNPKYTFDS…GALIRIVAFS (217 aa)) is domain III, AAA+ region. Positions 154, 156, 157, and 158 each coordinate ATP. The segment at 327-448 (SLTNKEISVD…NELNKRINQK (122 aa)) is domain IV, binds dsDNA.

It belongs to the DnaA family. In terms of assembly, oligomerizes as a right-handed, spiral filament on DNA at oriC.

The protein localises to the cytoplasm. Its function is as follows. Plays an essential role in the initiation and regulation of chromosomal replication. ATP-DnaA binds to the origin of replication (oriC) to initiate formation of the DNA replication initiation complex once per cell cycle. Binds the DnaA box (a 9 base pair repeat at the origin) and separates the double-stranded (ds)DNA. Forms a right-handed helical filament on oriC DNA; dsDNA binds to the exterior of the filament while single-stranded (ss)DNA is stabiized in the filament's interior. The ATP-DnaA-oriC complex binds and stabilizes one strand of the AT-rich DNA unwinding element (DUE), permitting loading of DNA polymerase. After initiation quickly degrades to an ADP-DnaA complex that is not apt for DNA replication. Binds acidic phospholipids. This Clostridium botulinum (strain 657 / Type Ba4) protein is Chromosomal replication initiator protein DnaA.